The primary structure comprises 336 residues: Ornithine carbamoyltransferase (336 aa).

Residues 56–59 (STRT), Gln83, Arg107, and 134–137 (HPTQ) contribute to the carbamoyl phosphate site. L-ornithine is bound by residues Asn168, Asp232, and 236 to 237 (SM). Residues 274–275 (CL) and Arg320 each bind carbamoyl phosphate.

The protein belongs to the aspartate/ornithine carbamoyltransferase superfamily. OTCase family.

It localises to the cytoplasm. The enzyme catalyses carbamoyl phosphate + L-ornithine = L-citrulline + phosphate + H(+). Its pathway is amino-acid biosynthesis; L-arginine biosynthesis; L-arginine from L-ornithine and carbamoyl phosphate: step 1/3. Functionally, reversibly catalyzes the transfer of the carbamoyl group from carbamoyl phosphate (CP) to the N(epsilon) atom of ornithine (ORN) to produce L-citrulline. The sequence is that of Ornithine carbamoyltransferase from Erwinia tasmaniensis (strain DSM 17950 / CFBP 7177 / CIP 109463 / NCPPB 4357 / Et1/99).